A 142-amino-acid chain; its full sequence is MSLESSSTSVPPCFPSVLPSVPDDIASSSPPPMSYITSQEMKCILYWFASWSGPQRERFLQDLVAKAVPGKLQPLLDALEQLSMSAANRPPCIFECQLRLWDQWFRGWAEQERNEFVRQLEVSEPDFVAKFYQAVAATAGKD.

The protein localises to the mitochondrion. This is an uncharacterized protein from Mus musculus (Mouse).